We begin with the raw amino-acid sequence, 341 residues long: Protein DOWNY MILDEW RESISTANCE 6 (341 aa).

Positions 188 to 288 (QGQHMAVNYY…RLSVASFLCP (101 aa)) constitute a Fe2OG dioxygenase domain. H212, D214, and H269 together coordinate Fe cation. Residue R279 coordinates 2-oxoglutarate.

It belongs to the iron/ascorbate-dependent oxidoreductase family. Requires Fe(2+) as cofactor.

The enzyme catalyses salicylate + NADH + O2 + H(+) = 2,3-dihydroxybenzoate + NAD(+) + H2O. Its function is as follows. Converts salicylic acid (SA) to 2,3-dihydroxybenzoic acid (2,3-DHBA). Suppressor of immunity. Regulates negatively defense associated genes expression (e.g. PR-1, PR-2, and PR-5). Negative regulator of defense against Hyaloperonospora arabidopsidis. Functionally, (Microbial infection) Required for susceptibility to the downy mildew pathogen Hyaloperonospora arabidopsidis. (Microbial infection) Required for susceptibility to Pseudomonas syringae pv. tomato DC3000. In terms of biological role, (Microbial infection) Required for susceptibility to the oomycete Phytophthora capsici. The sequence is that of Protein DOWNY MILDEW RESISTANCE 6 from Arabidopsis thaliana (Mouse-ear cress).